We begin with the raw amino-acid sequence, 220 residues long: Small ribosomal subunit protein eS8 (220 aa).

It belongs to the eukaryotic ribosomal protein eS8 family.

The polypeptide is Small ribosomal subunit protein eS8 (RPS8A) (Leishmania major).